A 312-amino-acid chain; its full sequence is tRNA dimethylallyltransferase (312 aa).

Position 15 to 22 (Gly15 to Ser22) interacts with ATP. Thr17 to Ser22 contributes to the substrate binding site. Residues Asp40–Gln43 form an interaction with substrate tRNA region.

This sequence belongs to the IPP transferase family. Monomer. Requires Mg(2+) as cofactor.

It carries out the reaction adenosine(37) in tRNA + dimethylallyl diphosphate = N(6)-dimethylallyladenosine(37) in tRNA + diphosphate. In terms of biological role, catalyzes the transfer of a dimethylallyl group onto the adenine at position 37 in tRNAs that read codons beginning with uridine, leading to the formation of N6-(dimethylallyl)adenosine (i(6)A). This chain is tRNA dimethylallyltransferase, found in Streptomyces griseus subsp. griseus (strain JCM 4626 / CBS 651.72 / NBRC 13350 / KCC S-0626 / ISP 5235).